A 334-amino-acid polypeptide reads, in one-letter code: D-alanine--D-alanine ligase (334 aa).

Residues 111–315 (KRVCLSHGVP…YEDLCIEILR (205 aa)) form the ATP-grasp domain. 141-196 (AAEFGLPLMLKAPHEGSTIGIAKVETAEGMQAGFDLCAKYEAVVLVEQFVKGRELT) is an ATP binding site. Residues Asp268, Glu282, and Asn284 each coordinate Mg(2+).

Belongs to the D-alanine--D-alanine ligase family. The cofactor is Mg(2+). Mn(2+) serves as cofactor.

Its subcellular location is the cytoplasm. It catalyses the reaction 2 D-alanine + ATP = D-alanyl-D-alanine + ADP + phosphate + H(+). It participates in cell wall biogenesis; peptidoglycan biosynthesis. Cell wall formation. This Herminiimonas arsenicoxydans protein is D-alanine--D-alanine ligase.